Consider the following 293-residue polypeptide: NAD kinase (293 aa).

Aspartate 72 serves as the catalytic Proton acceptor. Residues 72–73 (DG), 146–147 (ND), arginine 157, arginine 174, aspartate 176, 187–192 (TAYALS), and glutamine 247 contribute to the NAD(+) site.

Belongs to the NAD kinase family. It depends on a divalent metal cation as a cofactor.

It is found in the cytoplasm. It carries out the reaction NAD(+) + ATP = ADP + NADP(+) + H(+). Its function is as follows. Involved in the regulation of the intracellular balance of NAD and NADP, and is a key enzyme in the biosynthesis of NADP. Catalyzes specifically the phosphorylation on 2'-hydroxyl of the adenosine moiety of NAD to yield NADP. This chain is NAD kinase, found in Teredinibacter turnerae (strain ATCC 39867 / T7901).